The primary structure comprises 137 residues: Large ribosomal subunit protein uL16 (137 aa).

The protein belongs to the universal ribosomal protein uL16 family. As to quaternary structure, part of the 50S ribosomal subunit.

Its function is as follows. Binds 23S rRNA and is also seen to make contacts with the A and possibly P site tRNAs. This Hydrogenovibrio crunogenus (strain DSM 25203 / XCL-2) (Thiomicrospira crunogena) protein is Large ribosomal subunit protein uL16.